We begin with the raw amino-acid sequence, 200 residues long: Recombination protein RecR (200 aa).

Residues 58 to 75 (CPTCFCLKSHPESVCSFC) form a C4-type zinc finger. One can recognise a Toprim domain in the interval 82–177 (SILCIVATPK…SVSRLALGLP (96 aa)).

Belongs to the RecR family.

Functionally, may play a role in DNA repair. It seems to be involved in an RecBC-independent recombinational process of DNA repair. It may act with RecF and RecO. This Chlamydia abortus (strain DSM 27085 / S26/3) (Chlamydophila abortus) protein is Recombination protein RecR.